The chain runs to 297 residues: uncharacterized protein (297 aa).

3 disordered regions span residues 19 to 133 (NEVD…EEKE), 147 to 214 (AEDD…VGIA), and 226 to 277 (EKTS…SKEA). A compositionally biased stretch (basic and acidic residues) spans 41–52 (EEPKNEKEKHDD). Acidic residues predominate over residues 77-87 (PAEDDEEDEEF). Over residues 88–101 (PSQSYGPSIPSNFR) the composition is skewed to polar residues. Composition is skewed to basic and acidic residues over residues 147–161 (AEDD…REEW) and 236–268 (IHQK…EVRG).

This is an uncharacterized protein from Caenorhabditis elegans.